The primary structure comprises 476 residues: Eukaryotic translation initiation factor 3 subunit L (476 aa).

The region spanning 257–452 is the PCI domain; sequence DAIRMFSHIL…DLDYALENDL (196 aa).

The protein belongs to the eIF-3 subunit L family. As to quaternary structure, component of the eukaryotic translation initiation factor 3 (eIF-3) complex.

Its subcellular location is the cytoplasm. Component of the eukaryotic translation initiation factor 3 (eIF-3) complex, which is involved in protein synthesis of a specialized repertoire of mRNAs and, together with other initiation factors, stimulates binding of mRNA and methionyl-tRNAi to the 40S ribosome. The eIF-3 complex specifically targets and initiates translation of a subset of mRNAs involved in cell proliferation. The chain is Eukaryotic translation initiation factor 3 subunit L from Aspergillus niger (strain ATCC MYA-4892 / CBS 513.88 / FGSC A1513).